Here is a 340-residue protein sequence, read N- to C-terminus: Erythroferrone (340 aa).

An N-terminal signal peptide occupies residues 1 to 24 (MASTRRPVGARTLLACASLLAAMG). Disordered regions lie at residues 30 to 63 (SAEPVGTHARPQPPGAELPAPPANSPPEPTIAHA), 79 to 112 (SDKGINSKRRSKARRLKLGLPGPPGPPGPQGPPG), and 141 to 161 (HCTRDLTTPASGSPSRVPAAQ). Over residues 40 to 58 (PQPPGAELPAPPANSPPEP) the composition is skewed to pro residues. Residues 84-95 (NSKRRSKARRLK) show a composition bias toward basic residues. Hydroxyproline occurs at positions 99, 101, 102, 104, 105, and 107. Positions 99–112 (PGPPGPPGPQGPPG) are enriched in pro residues. Residues 145–154 (DLTTPASGSP) are compositionally biased toward polar residues. The 156-residue stretch at 185–340 (APRVEAAFHC…SHFSAILLGL (156 aa)) folds into the C1q domain. Residues Asn-229, Asn-281, Asn-292, and Asn-319 are each glycosylated (N-linked (GlcNAc...) asparagine).

The protein belongs to the adipolin/erythroferrone family. As to quaternary structure, homodimer; disulfide-linked. Forms trimer, hexamers and higher molecular weight oligomers. May form heteromeric complexes with C1QTNF2 and C1QTNF12 and, to a lesser extent, with C1QTNF5 and C1QTNF10. Interacts with BMP5 and BMP7; the interaction inhibits BMP-induced transcription of HAMP. Interacts with BMP6; the interaction inhibits BMP-induced transcription of HAMP. Interacts with BMP2. Interacts with heterodimers composed of BMP2 and BMP6 in vitro, the interaction inhibits the heterodimer binding to its receptor BMPR1A /ALK3 and thereby suppresses expression of HAMP. Post-translationally, N-glycosylated; required for secretion of the mature protein. As to expression, expressed in the soleus muscle in the leg (at protein level). Found in blood (at protein level). Weakly expressed in the heart (at protein level). Predominantly expressed in skeletal muscle and, at much lower levels, in other tissues, including lung, eye, smooth muscle, brain and kidney. Within skeletal muscles, higher expression levels in soleus as compared with plantaris. Expressed in osteoblasts, mature osteoclasts and erythroblasts. When fasting, females tend to have higher circulating levels than males. Obese mice tend to have lower expression and circulating levels as compared to lean animals. Following EPO treatment, only expressed in bone marrow and spleen.

The protein resides in the secreted. Functionally, iron-regulatory hormone that acts as an erythroid regulator after hemorrhage: produced by erythroblasts following blood loss and mediates suppression of hepcidin (HAMP) expression in the liver, thereby promoting increased iron absorption and mobilization from stores. Promotes lipid uptake into adipocytes and hepatocytes via transcriptional up-regulation of genes involved in fatty acid uptake. Inhibits apoptosis and inflammatory response in cardiomyocytes via promotion of sphingosine-1-phosphate (S1P) and cAMP-dependent activation of AKT signaling. Inhibits autophagy induced by nutrient deficiency in hepatocytes via promoting the phosphorylation of IRS1, AKT, and MTOR, and thereby subsequent activation of the AKT-MTOR signaling pathway. Negatively regulates the differentiation of osteoblasts, potentially via sequestering BMP2, and thereby inhibits the activation of SMAD signaling. The reduction in BMP2 signaling in osteoblasts also results in an increase in expression of the osteoclastogenesis-promoting factors TNFSF11/RANKL and SOST, thereby indirectly promotes bone resorption. In Mus musculus (Mouse), this protein is Erythroferrone.